Consider the following 513-residue polypeptide: Lysine--tRNA ligase (513 aa).

Residues Glu423 and Glu430 each coordinate Mg(2+).

This sequence belongs to the class-II aminoacyl-tRNA synthetase family. Homodimer. The cofactor is Mg(2+).

It localises to the cytoplasm. It carries out the reaction tRNA(Lys) + L-lysine + ATP = L-lysyl-tRNA(Lys) + AMP + diphosphate. This Anaeromyxobacter dehalogenans (strain 2CP-1 / ATCC BAA-258) protein is Lysine--tRNA ligase.